The sequence spans 558 residues: Dihydroxy-acid dehydratase (558 aa).

Asp78 provides a ligand contact to Mg(2+). Cys119 is a [2Fe-2S] cluster binding site. Mg(2+) is bound by residues Asp120 and Lys121. Residue Lys121 is modified to N6-carboxylysine. Residue Cys191 coordinates [2Fe-2S] cluster. Glu443 lines the Mg(2+) pocket. The active-site Proton acceptor is the Ser469.

It belongs to the IlvD/Edd family. Homodimer. The cofactor is [2Fe-2S] cluster. Mg(2+) is required as a cofactor.

The enzyme catalyses (2R)-2,3-dihydroxy-3-methylbutanoate = 3-methyl-2-oxobutanoate + H2O. It catalyses the reaction (2R,3R)-2,3-dihydroxy-3-methylpentanoate = (S)-3-methyl-2-oxopentanoate + H2O. It functions in the pathway amino-acid biosynthesis; L-isoleucine biosynthesis; L-isoleucine from 2-oxobutanoate: step 3/4. The protein operates within amino-acid biosynthesis; L-valine biosynthesis; L-valine from pyruvate: step 3/4. Functionally, functions in the biosynthesis of branched-chain amino acids. Catalyzes the dehydration of (2R,3R)-2,3-dihydroxy-3-methylpentanoate (2,3-dihydroxy-3-methylvalerate) into 2-oxo-3-methylpentanoate (2-oxo-3-methylvalerate) and of (2R)-2,3-dihydroxy-3-methylbutanoate (2,3-dihydroxyisovalerate) into 2-oxo-3-methylbutanoate (2-oxoisovalerate), the penultimate precursor to L-isoleucine and L-valine, respectively. The polypeptide is Dihydroxy-acid dehydratase (Solidesulfovibrio magneticus (strain ATCC 700980 / DSM 13731 / RS-1) (Desulfovibrio magneticus)).